A 404-amino-acid chain; its full sequence is Argininosuccinate synthase (404 aa).

Residues 12 to 20 (AYSGGLDTS) and Ala-40 each bind ATP. Residues Tyr-92 and Ser-97 each coordinate L-citrulline. Residue Gly-122 participates in ATP binding. Thr-124, Asn-128, and Asp-129 together coordinate L-aspartate. Asn-128 serves as a coordination point for L-citrulline. Arg-132, Ser-181, Ser-190, Glu-266, and Tyr-278 together coordinate L-citrulline.

Belongs to the argininosuccinate synthase family. Type 1 subfamily. Homotetramer.

The protein localises to the cytoplasm. It catalyses the reaction L-citrulline + L-aspartate + ATP = 2-(N(omega)-L-arginino)succinate + AMP + diphosphate + H(+). Its pathway is amino-acid biosynthesis; L-arginine biosynthesis; L-arginine from L-ornithine and carbamoyl phosphate: step 2/3. This Erwinia tasmaniensis (strain DSM 17950 / CFBP 7177 / CIP 109463 / NCPPB 4357 / Et1/99) protein is Argininosuccinate synthase.